We begin with the raw amino-acid sequence, 195 residues long: Cysteine/O-acetylserine efflux protein (195 aa).

Topologically, residues 1–7 are periplasmic; sequence MTPTLLS. The chain crosses the membrane as a helical span at residues 8 to 28; that stretch reads AFWTYTLITAMTPGPNNILAL. The Cytoplasmic portion of the chain corresponds to 29 to 46; that stretch reads SSATSHGFRQSTRVLAGM. Residues 47–67 form a helical membrane-spanning segment; the sequence is SLGFLIVMLLCAGISFSLAVI. Residues 68–69 lie on the Periplasmic side of the membrane; that stretch reads DP. Residues 70-90 form a helical membrane-spanning segment; it reads AAVHLLSWAGAAYIVWLAWKI. At 91–104 the chain is on the cytoplasmic side; that stretch reads ATSPTKEDGLQAKP. Residues 105 to 125 traverse the membrane as a helical segment; it reads ISFWASFALQFVNVKIILYGV. Over 126–141 the chain is Periplasmic; it reads TALSTFVLPQTQALSW. The helical transmembrane segment at 142–162 threads the bilayer; sequence VVGVSVLLAMIGTFGNVCWAL. The Cytoplasmic segment spans residues 163–176; it reads AGHLFQRLFRQYGR. The helical transmembrane segment at 177-194 threads the bilayer; that stretch reads QLNIVLALLLVYCAVRIF. A topological domain (periplasmic) is located at residue Y195.

Belongs to the Rht family.

It localises to the cell inner membrane. The enzyme catalyses O-acetyl-L-serine(in) = O-acetyl-L-serine(out). The catalysed reaction is L-cysteine(in) = L-cysteine(out). Functionally, exporter of O-acetylserine (OAS) and cysteine. This chain is Cysteine/O-acetylserine efflux protein (eamB), found in Escherichia coli O9:H4 (strain HS).